The primary structure comprises 360 residues: uncharacterized protein (360 aa).

Positions Lys-11 to Glu-40 constitute a 4Fe-4S ferredoxin-type domain.

This sequence belongs to the FrhB family.

This is an uncharacterized protein from Methanocaldococcus jannaschii (strain ATCC 43067 / DSM 2661 / JAL-1 / JCM 10045 / NBRC 100440) (Methanococcus jannaschii).